We begin with the raw amino-acid sequence, 461 residues long: Nicotianamine aminotransferase A (461 aa).

Positions 1-29 (MVHQSNGHGEAAAAAANGKSNGHAAAANG) are disordered. Over residues 11-29 (AAAAAANGKSNGHAAAANG) the composition is skewed to low complexity. Lysine 289 carries the post-translational modification N6-(pyridoxal phosphate)lysine.

The protein belongs to the class-I pyridoxal-phosphate-dependent aminotransferase family. Pyridoxal 5'-phosphate serves as cofactor. In terms of tissue distribution, expressed in roots, but not in leaves.

The enzyme catalyses nicotianamine + 2-oxoglutarate = 3''-deamino-3''-oxonicotianamine + L-glutamate. In terms of biological role, involved in biosynthesis of mugineic acid family phytosiderophores. This is Nicotianamine aminotransferase A from Hordeum vulgare (Barley).